The primary structure comprises 339 residues: 4-hydroxy-2-oxovalerate aldolase 3 (339 aa).

A Pyruvate carboxyltransferase domain is found at 7–259 (IRVTDTSLRD…KTGIDFFAIA (253 aa)). A substrate-binding site is contributed by 15-16 (RD). D16 is a binding site for Mn(2+). The active-site Proton acceptor is the H19. Positions 169 and 198 each coordinate substrate. H198 and H200 together coordinate Mn(2+). Residue Y289 participates in substrate binding.

Belongs to the 4-hydroxy-2-oxovalerate aldolase family.

It catalyses the reaction (S)-4-hydroxy-2-oxopentanoate = acetaldehyde + pyruvate. In Rhodococcus opacus (strain B4), this protein is 4-hydroxy-2-oxovalerate aldolase 3.